A 169-amino-acid chain; its full sequence is Large ribosomal subunit protein uL10 (169 aa).

It belongs to the universal ribosomal protein uL10 family. Part of the ribosomal stalk of the 50S ribosomal subunit. The N-terminus interacts with L11 and the large rRNA to form the base of the stalk. The C-terminus forms an elongated spine to which L12 dimers bind in a sequential fashion forming a multimeric L10(L12)X complex.

Its function is as follows. Forms part of the ribosomal stalk, playing a central role in the interaction of the ribosome with GTP-bound translation factors. The chain is Large ribosomal subunit protein uL10 from Deinococcus geothermalis (strain DSM 11300 / CIP 105573 / AG-3a).